We begin with the raw amino-acid sequence, 423 residues long: Polyglutamylase complex subunit TTLL1 (423 aa).

A TTL domain is found at 1–367 (MAGKVKWVTD…NGEIPDCKWN (367 aa)). ATP contacts are provided by residues Lys-138, 144 to 145 (QG), 181 to 184 (SLYI), and 194 to 196 (KFD). Position 144 (Gln-144) interacts with a protein. Residue Arg-220 participates in L-glutamate binding. 241–242 (TN) is a binding site for ATP. Residue Lys-259 participates in L-glutamate binding. Asp-313, Glu-326, and Asn-328 together coordinate Mg(2+). An L-glutamate-binding site is contributed by Lys-344. A disordered region spans residues 391-423 (GAERELRSRPGQSLGPKGSRLRDAGRTVLTTWK).

Belongs to the tubulin polyglutamylase family. In terms of assembly, part of the neuronal tubulin polyglutamylase complex which contains TPGS1, TPGS2, TTLL1, LRRC49 and NICN1. Interacts with PCM1, CSTPP1 and LRRC49. It depends on Mg(2+) as a cofactor.

Its subcellular location is the cytoplasm. It is found in the cytoskeleton. The protein resides in the cilium basal body. The protein localises to the cilium axoneme. It localises to the cell projection. Its subcellular location is the cilium. It is found in the flagellum. It catalyses the reaction (L-glutamyl)(n)-gamma-L-glutamyl-L-glutamyl-[protein] + L-glutamate + ATP = (L-glutamyl)(n+1)-gamma-L-glutamyl-L-glutamyl-[protein] + ADP + phosphate + H(+). Functionally, catalytic subunit of a polyglutamylase complex which modifies tubulin, generating side chains of glutamate on the gamma-carboxyl group of specific glutamate residues within the C-terminal tail of tubulin. Probably involved in the side-chain elongation step of the polyglutamylation reaction rather than the initiation step. Modifies both alpha- and beta-tubulins with a preference for the alpha-tail. Unlike most polyglutamylases of the tubulin--tyrosine ligase family, only displays a catalytic activity when in complex with other proteins as it is most likely lacking domains important for autonomous activity. Part of the neuronal tubulin polyglutamylase complex. Mediates cilia and flagella polyglutamylation which is essential for their biogenesis and motility. Involved in respiratory motile cilia function through the regulation of beating asymmetry. Essential for sperm flagella biogenesis, motility and male fertility. Involved in KLF4 glutamylation which impedes its ubiquitination, thereby leading to somatic cell reprogramming, pluripotency maintenance and embryogenesis. The chain is Polyglutamylase complex subunit TTLL1 (TTLL1) from Bos taurus (Bovine).